Here is a 463-residue protein sequence, read N- to C-terminus: Endoglucanase EG-1 (463 aa).

The first 22 residues, 1-22 (MAPSATLPLTTAILAIGRLVAA), serve as a signal peptide directing secretion. The interval 23–397 (QQPGTSTPEV…DIGSTTNSTG (375 aa)) is catalytic. 4 N-linked (GlcNAc...) asparagine glycosylation sites follow: Asn-78, Asn-164, Asn-204, and Asn-208. Glu-218 (nucleophile) is an active-site residue. The active-site Proton donor is Glu-223. The interval 390 to 429 (GSTTNSTGGNPPPPPPPASSTTFSTTRRSSTTSSSPSCTQ) is disordered. Asn-394 carries N-linked (GlcNAc...) asparagine glycosylation. The interval 402–427 (PPPPPASSTTFSTTRRSSTTSSSPSC) is linker. Over residues 408–429 (SSTTFSTTRRSSTTSSSPSCTQ) the composition is skewed to low complexity. The CBM1 domain maps to 427 to 463 (CTQTHWGQCGGIGYTGCKTCTSGTTCQYGNDYYSQCL). Intrachain disulfides connect Cys-435/Cys-452 and Cys-446/Cys-462.

The protein belongs to the glycosyl hydrolase 7 (cellulase C) family.

The protein resides in the secreted. It carries out the reaction Endohydrolysis of (1-&gt;4)-beta-D-glucosidic linkages in cellulose, lichenin and cereal beta-D-glucans.. The biological conversion of cellulose to glucose generally requires three types of hydrolytic enzymes: (1) Endoglucanases which cut internal beta-1,4-glucosidic bonds; (2) Exocellobiohydrolases that cut the disaccharide cellobiose from the non-reducing end of the cellulose polymer chain; (3) Beta-1,4-glucosidases which hydrolyze the cellobiose and other short cello-oligosaccharides to glucose. This chain is Endoglucanase EG-1 (egl1), found in Trichoderma longibrachiatum.